Here is a 62-residue protein sequence, read N- to C-terminus: Large ribosomal subunit protein bL32 (62 aa).

It belongs to the bacterial ribosomal protein bL32 family.

This chain is Large ribosomal subunit protein bL32, found in Treponema denticola (strain ATCC 35405 / DSM 14222 / CIP 103919 / JCM 8153 / KCTC 15104).